The chain runs to 213 residues: Octanoyltransferase (213 aa).

The region spanning asparagine 32–aspartate 207 is the BPL/LPL catalytic domain. Residues arginine 71–histidine 78, serine 138–glycine 140, and glycine 151–alanine 153 each bind substrate. The active-site Acyl-thioester intermediate is the cysteine 169.

Belongs to the LipB family.

The protein resides in the cytoplasm. The enzyme catalyses octanoyl-[ACP] + L-lysyl-[protein] = N(6)-octanoyl-L-lysyl-[protein] + holo-[ACP] + H(+). It participates in protein modification; protein lipoylation via endogenous pathway; protein N(6)-(lipoyl)lysine from octanoyl-[acyl-carrier-protein]: step 1/2. Its function is as follows. Catalyzes the transfer of endogenously produced octanoic acid from octanoyl-acyl-carrier-protein onto the lipoyl domains of lipoate-dependent enzymes. Lipoyl-ACP can also act as a substrate although octanoyl-ACP is likely to be the physiological substrate. This chain is Octanoyltransferase, found in Shigella flexneri serotype 5b (strain 8401).